The sequence spans 516 residues: Cytochrome P450 monooxygenase otaC (516 aa).

A helical transmembrane segment spans residues 13–30 (FLWTAFAVGVVYCCTRMV). Heme is bound at residue C454.

This sequence belongs to the cytochrome P450 family. Heme serves as cofactor.

Its subcellular location is the membrane. It catalyses the reaction 7-methylmellein + 3 reduced [NADPH--hemoprotein reductase] + 3 O2 = 7-carboxymellein + 3 oxidized [NADPH--hemoprotein reductase] + 4 H2O + 4 H(+). It functions in the pathway mycotoxin biosynthesis. Cytochrome P450 monooxygenase; part of the gene cluster that mediates the biosynthesis of ochratoxin A (OTA), a mycotoxin composed of a chlorinated type I polyketide dihydroisocoumarin moiety linked to L-phenylalanine, and demonstrated to have nephrotoxic, immunotoxic, genotoxic, neurotoxic, and teratogenic properties. OtaC catalyzes the oxidation of 7-methylmellein (7-MM) into 7-carboxymellein. The pathway begins with the highly reducing polyketide synthase otaA that catalyzes the formation of the isocoumarin group during the initial stages of biosynthesis, starting from one acetate and 4 malonate units, to originate the characteristic pentaketide skeleton 7-methylmellein (7-MM) of the OTA molecule. The newly identified cyclase otaY might be involved in the polyketide cyclization reaction during the initial steps of the OTA biosynthesis. 7-MM is then oxidized into 7-carboxymellein (also called ochratoxin beta) by the cytochrome P450 monooxygenase otaC. The NRPS encoded by the otaB gene is involved in the linking of phenylalanine to the dihydroisocoumarin ring. The reaction catalyzed by NRPS results in the production of ochratoxin B (OTB), which is the non-chlorinated analog of OTA and which subsequently serves as the substrate of the halogenase otaD for chlorination activity to form the final molecular structure of OTA, containing a chlorine atom in the C-5 position of the molecule. This Aspergillus carbonarius (strain ITEM 5010) protein is Cytochrome P450 monooxygenase otaC.